The chain runs to 266 residues: Single-stranded DNA-binding protein WHY1, chloroplastic (266 aa).

A chloroplast-targeting transit peptide spans 1–37 (MPPPAPLFLSLASTPPPALMPVHHPRAPQSLTLVPPV). Residues 53 to 81 (SPRHSDYFDPRAPPPPRGDGGYGRPPNGA) are disordered. The tract at residues 94–99 (KGKAAL) is required for ssDNA binding. The Nuclear localization signal motif lies at 172–185 (KGRSEEGKVRKVLK).

The protein belongs to the Whirly family. Homotetramer.

The protein resides in the plastid. It localises to the chloroplast stroma. It is found in the nucleus. Functionally, single-stranded DNA and RNA binding protein that maintains plastid genome stability by preventing break-induced and short homology-dependent illegitimate recombinations. Functions in RNA metabolism and is involved in the maturation of the atpF and 23S ribosomal RNAs. This is Single-stranded DNA-binding protein WHY1, chloroplastic (WHY1) from Zea mays (Maize).